Consider the following 20-residue polypeptide: ALGDQLLSVFVDHTLVDEVA.

The region spanning 1 to 20 (ALGDQLLSVFVDHTLVDEVA) is the GMPS ATP-PPase domain.

Homodimer.

The catalysed reaction is XMP + L-glutamine + ATP + H2O = GMP + L-glutamate + AMP + diphosphate + 2 H(+). The protein operates within purine metabolism; GMP biosynthesis; GMP from XMP (L-Gln route): step 1/1. Its function is as follows. Catalyzes the synthesis of GMP from XMP. The polypeptide is GMP synthase [glutamine-hydrolyzing] (guaA) (Fructilactobacillus sanfranciscensis (Lactobacillus sanfranciscensis)).